The following is a 98-amino-acid chain: Small ribosomal subunit protein uS17 (98 aa).

This sequence belongs to the universal ribosomal protein uS17 family. In terms of assembly, part of the 30S ribosomal subunit.

In terms of biological role, one of the primary rRNA binding proteins, it binds specifically to the 5'-end of 16S ribosomal RNA. The protein is Small ribosomal subunit protein uS17 of Leptothrix cholodnii (strain ATCC 51168 / LMG 8142 / SP-6) (Leptothrix discophora (strain SP-6)).